Here is a 361-residue protein sequence, read N- to C-terminus: DNA polymerase IV 3 (361 aa).

Positions 12–192 (IIHVDMDAFY…LPVNKFHGVG (181 aa)) constitute a UmuC domain. Residues D16 and D110 each contribute to the Mg(2+) site. The active site involves E111.

This sequence belongs to the DNA polymerase type-Y family. In terms of assembly, monomer. The cofactor is Mg(2+).

Its subcellular location is the cytoplasm. It carries out the reaction DNA(n) + a 2'-deoxyribonucleoside 5'-triphosphate = DNA(n+1) + diphosphate. In terms of biological role, poorly processive, error-prone DNA polymerase involved in untargeted mutagenesis. Copies undamaged DNA at stalled replication forks, which arise in vivo from mismatched or misaligned primer ends. These misaligned primers can be extended by PolIV. Exhibits no 3'-5' exonuclease (proofreading) activity. May be involved in translesional synthesis, in conjunction with the beta clamp from PolIII. The polypeptide is DNA polymerase IV 3 (dinB3) (Mesorhizobium japonicum (strain LMG 29417 / CECT 9101 / MAFF 303099) (Mesorhizobium loti (strain MAFF 303099))).